Consider the following 280-residue polypeptide: DegV domain-containing protein CA_C1624 (280 aa).

Residues isoleucine 4–lysine 279 enclose the DegV domain. Threonine 60 and serine 93 together coordinate hexadecanoate.

Functionally, may bind long-chain fatty acids, such as palmitate, and may play a role in lipid transport or fatty acid metabolism. This is DegV domain-containing protein CA_C1624 from Clostridium acetobutylicum (strain ATCC 824 / DSM 792 / JCM 1419 / IAM 19013 / LMG 5710 / NBRC 13948 / NRRL B-527 / VKM B-1787 / 2291 / W).